Consider the following 343-residue polypeptide: Protein RecA (343 aa).

Position 64–71 (64–71) interacts with ATP; sequence GPESSGKT.

This sequence belongs to the RecA family.

It localises to the cytoplasm. Can catalyze the hydrolysis of ATP in the presence of single-stranded DNA, the ATP-dependent uptake of single-stranded DNA by duplex DNA, and the ATP-dependent hybridization of homologous single-stranded DNAs. It interacts with LexA causing its activation and leading to its autocatalytic cleavage. The sequence is that of Protein RecA from Acidiphilium cryptum (strain JF-5).